The chain runs to 69 residues: Small, acid-soluble spore protein C1 (69 aa).

The protein belongs to the alpha/beta-type SASP family.

SASP are bound to spore DNA. They are double-stranded DNA-binding proteins that cause DNA to change to an a-like conformation. They protect the DNA backbone from chemical and enzymatic cleavage and are thus involved in dormant spore's high resistance to UV light. In Priestia megaterium (Bacillus megaterium), this protein is Small, acid-soluble spore protein C1 (SASP-C1).